Consider the following 115-residue polypeptide: Large ribosomal subunit protein P2 (115 aa).

M1 is modified (N-acetylmethionine). 2 positions are modified to phosphoserine: S17 and S19. At K21 the chain carries N6-acetyllysine; alternate. Position 21 is an N6-succinyllysine; alternate (K21). Residues 76 to 90 (APGSAAPAAGSAPAA) show a composition bias toward low complexity. The segment at 76-115 (APGSAAPAAGSAPAAAEEKKEEKKEESEESDDDMGFGLFD) is disordered. S79 and S86 each carry phosphoserine. Residues 91–101 (AEEKKEEKKEE) show a composition bias toward basic and acidic residues. A phosphoserine mark is found at S102 and S105.

It belongs to the eukaryotic ribosomal protein P1/P2 family. As to quaternary structure, heterodimer with RPLP1 at the lateral ribosomal stalk of the large ribosomal subunit.

Plays an important role in the elongation step of protein synthesis. This chain is Large ribosomal subunit protein P2 (RPLP2), found in Bos taurus (Bovine).